Here is a 497-residue protein sequence, read N- to C-terminus: Probable pyruvate kinase, cytosolic isozyme (497 aa).

Residue arginine 37 coordinates substrate. Residues asparagine 39, serine 41, aspartate 71, and threonine 72 each contribute to the K(+) site. 39–42 provides a ligand contact to ATP; sequence NFSH. ATP is bound by residues arginine 78 and lysine 163. Lysine 227 contributes to the substrate binding site. Mg(2+) is bound at residue glutamate 229. 3 residues coordinate substrate: glycine 252, aspartate 253, and threonine 285. A Mg(2+)-binding site is contributed by aspartate 253.

It belongs to the pyruvate kinase family. As to quaternary structure, homotetramer. Mg(2+) is required as a cofactor. K(+) serves as cofactor.

It localises to the cytoplasm. Its subcellular location is the cytosol. It catalyses the reaction pyruvate + ATP = phosphoenolpyruvate + ADP + H(+). It participates in carbohydrate degradation; glycolysis; pyruvate from D-glyceraldehyde 3-phosphate: step 5/5. Key regulatory enzyme of the glycolytic pathway that catalyzes the final step of glycolysis, converting ADP and phosphoenolpyruvate (PEP) to ATP and pyruvate by essentially irreversible transphosphorylation. The polypeptide is Probable pyruvate kinase, cytosolic isozyme (Arabidopsis thaliana (Mouse-ear cress)).